The following is a 687-amino-acid chain: Transcription activator of gluconeogenesis SNOG_12336 (687 aa).

The segment at 1-56 is disordered; sequence MASPDAEDASPSPEYRSDLDDDMAAEQKTDDGSPSQKSSNGQKPASNAKDPLRPRR. Residues 32–45 are compositionally biased toward polar residues; that stretch reads GSPSQKSSNGQKPA. The segment at residues 63 to 91 is a DNA-binding region (zn(2)-C6 fungal-type); the sequence is CFACQRAHLTCGDERPCTRCIKRGLQDHC. 2 stretches are compositionally biased toward polar residues: residues 150–159 and 169–179; these read PSGTFYQPPS and HGRSFSDQQSP. 3 disordered regions span residues 150–214, 300–411, and 536–561; these read PSGT…GPLF, ESQS…KRHR, and GNSREADESEMSTQTNTTPNLTGQEA. The span at 195–212 shows a compositional bias: low complexity; sequence PPSSISQGQPGQMQQFGP. Residues 300-318 are compositionally biased toward polar residues; the sequence is ESQSRQNSMHIHTPTSSAT. Residues 342 to 357 show a composition bias toward low complexity; sequence PSSHSTASPASTDASA. Composition is skewed to polar residues over residues 362-384, 392-402, and 546-561; these read NPLSTATFFANTNRGQPQRSPTT, RPPSTALQPIH, and MSTQTNTTPNLTGQEA. A PAS domain is found at 482–553; it reads NLMTLQDHFT…SEMSTQTNTT (72 aa).

It belongs to the ERT1/acuK family.

The protein localises to the nucleus. In terms of biological role, transcription factor which regulates nonfermentable carbon utilization. Activator of gluconeogenetic genes. The polypeptide is Transcription activator of gluconeogenesis SNOG_12336 (Phaeosphaeria nodorum (strain SN15 / ATCC MYA-4574 / FGSC 10173) (Glume blotch fungus)).